Here is a 55-residue protein sequence, read N- to C-terminus: MEFTTAMLGASLISTTSTQSKHNLVNNCCCSSSTSESSMPASCACTKCGCKTCKC.

This sequence belongs to the metallothionein superfamily. Type 11 family.

This chain is Metallothionein-3 (MTP3), found in Yarrowia lipolytica (strain CLIB 122 / E 150) (Yeast).